Here is a 261-residue protein sequence, read N- to C-terminus: MNKLYWQTLGEGKTHLVLLHGWGLNAQVWQSIITRLSSHFTLHLVDLPGYGRSQGFPVLTLKEMADIVFSQAPEKKAIWLGWSLGGLVASRIALDNPNNVRALITVASSPCFAAHEAWPGIKPDVLKGFEQQLSDNFHRTVERFLALQTLGTQSAREDTKALKAVVLAQPLPSVETLNGGLEILRTEDLREQLTTLCCPFIRLYGYLDGLVPRKVAALLDARYPDSPSVIFRHAAHAPFISHPDEFSETLLKQCEALSILA.

In terms of domain architecture, AB hydrolase-1 spans 15-243 (HLVLLHGWGL…AAHAPFISHP (229 aa)). Residues Trp22, 83–84 (SL), and 144–148 (FLALQ) contribute to the substrate site. Ser83 serves as the catalytic Nucleophile. Residues Asp208 and His236 contribute to the active site. Residue His236 participates in substrate binding.

Belongs to the AB hydrolase superfamily. Carboxylesterase BioH family. Monomer.

The protein resides in the cytoplasm. It catalyses the reaction 6-carboxyhexanoyl-[ACP] methyl ester + H2O = 6-carboxyhexanoyl-[ACP] + methanol + H(+). It participates in cofactor biosynthesis; biotin biosynthesis. Its function is as follows. The physiological role of BioH is to remove the methyl group introduced by BioC when the pimeloyl moiety is complete. It allows to synthesize pimeloyl-ACP via the fatty acid synthetic pathway through the hydrolysis of the ester bonds of pimeloyl-ACP esters. The sequence is that of Pimeloyl-[acyl-carrier protein] methyl ester esterase from Proteus mirabilis (strain HI4320).